The sequence spans 394 residues: 8-amino-7-oxononanoate synthase (394 aa).

R21 contributes to the substrate binding site. Residue 112-113 coordinates pyridoxal 5'-phosphate; the sequence is GY. Residue H137 participates in substrate binding. The pyridoxal 5'-phosphate site is built by S183, H211, and T239. K242 carries the N6-(pyridoxal phosphate)lysine modification. T358 is a binding site for substrate.

This sequence belongs to the class-II pyridoxal-phosphate-dependent aminotransferase family. BioF subfamily. Homodimer. Pyridoxal 5'-phosphate is required as a cofactor.

It catalyses the reaction 6-carboxyhexanoyl-[ACP] + L-alanine + H(+) = (8S)-8-amino-7-oxononanoate + holo-[ACP] + CO2. Its pathway is cofactor biosynthesis; biotin biosynthesis. In terms of biological role, catalyzes the decarboxylative condensation of pimeloyl-[acyl-carrier protein] and L-alanine to produce 8-amino-7-oxononanoate (AON), [acyl-carrier protein], and carbon dioxide. The chain is 8-amino-7-oxononanoate synthase from Burkholderia pseudomallei (strain K96243).